Here is a 906-residue protein sequence, read N- to C-terminus: Transmembrane channel-like protein 2 (906 aa).

Positions 1-150 are disordered; sequence MSHQVKGLKE…SASGGESLSE (150 aa). The Cytoplasmic portion of the chain corresponds to 1-263; it reads MSHQVKGLKE…IFLRWMYGVN (263 aa). Basic residues predominate over residues 69–79; it reads PRRKQTGRRRH. Residues 80-127 show a composition bias toward basic and acidic residues; that stretch reads REELGEQERGEAERTCEGRRKRDERASFQERTAAPKREKEIPRREEKS. Over residues 135–147 the composition is skewed to low complexity; the sequence is SSSLASSASGGES. A helical membrane pass occupies residues 264 to 284; it reads LVLFGLIFGLVIIPEVLMGMP. The Extracellular portion of the chain corresponds to 285–336; that stretch reads YGSIPRKTVPRAEEEKAMDFSVLWDFEGYIKYSALFYGYYNNQRTIGWLRYR. Residues 337-357 traverse the membrane as a helical segment; sequence LPMAYFMVGVSVFGYSLIIVI. Residues 358–431 are Cytoplasmic-facing; it reads RSMASNTQGS…NIHLTRFLRV (74 aa). A helical membrane pass occupies residues 432–452; that stretch reads LANFLIICCLCGSGYLIYFVV. The Extracellular portion of the chain corresponds to 453–508; the sequence is KRSQQFSKMQNVSWYERNEVEIVMSLLGMFCPPLFETIAALENYHPRTGLKWQLGR. A helical membrane pass occupies residues 509-529; sequence IFALFLGNLYTFLLALMDDVH. Over 530 to 693 the chain is Cytoplasmic; the sequence is LKLANEETIK…RVFKASRSNN (164 aa). Residues 694–714 form a helical membrane-spanning segment; it reads FYMGLLLLVLFLSLLPVAYTI. Over 715–750 the chain is Extracellular; it reads MSLPPSFDCGPFSGKNRMYDVLQETIENDFPTFLGK. A helical transmembrane segment spans residues 751 to 771; the sequence is IFAFLANPGLIIPAILLMFLA. The Cytoplasmic portion of the chain corresponds to 772 to 906; the sequence is IYYLNSVSKS…SGKSAQRPPH (135 aa). Residues 800–906 form a disordered region; sequence EKSHKSVKGK…SGKSAQRPPH (107 aa). 3 stretches are compositionally biased toward polar residues: residues 820–846, 854–866, and 886–900; these read KSSS…QSQA, PGTS…TTLP, and APSQ…SGKS.

Belongs to the TMC family. Forms the MET channel composed of TMC dimer (TMC1 or TMC2), TMIE, TOMT, CIB (CIB2 or CIB3), LHFPL5 and PDH15. The interaction of TMC1 and TMC2 with TOMT is required for the transportation of TMC1/2 into the stereocilia of hair cells. Interacts (via N-terminus) with both isoforms CD1 and CD3 of PCDH15. Can form a heterodimer with TMC1, TMC5 or TMC7. In terms of tissue distribution, detected in fetal cochlea.

It is found in the cell membrane. The enzyme catalyses Ca(2+)(in) = Ca(2+)(out). Functionally, pore-forming subunit of the mechanotransducer (MET) non-selective cation channel complex located at the tips of stereocilia of cochlear hair cells and that mediates sensory transduction in the auditory system. The MET complex is composed of two dimeric pore-forming ion-conducting transmembrane TMC (TMC1 or TMC2) subunits, and aided by several auxiliary proteins including LHFPL5, TMIE, CIB2/3 and TOMT, and the tip-link PCDH15. MET channel is activated by tension in the tip-link extending from the side wall of one stereocilium to the tip of the adjacent shorter stereocilium, where the channel is located. TMC2 MET channel is highly permeable to calcium and likely transports monovalent cations. Also involved in vestibular hair cell transduction current of the mammalian inner ear. This is Transmembrane channel-like protein 2 from Homo sapiens (Human).